A 230-amino-acid polypeptide reads, in one-letter code: Cytochrome c oxidase subunit 2 (230 aa).

The Mitochondrial intermembrane portion of the chain corresponds to 1 to 14 (MAHPTQLGFQDAAS). Residues 15-45 (PVMEELLHFHDHALMIVFLISTLVLYIIIAM) traverse the membrane as a helical segment. The Mitochondrial matrix segment spans residues 46 to 59 (VSTKLTNKYILDSQ). The helical transmembrane segment at 60–87 (EIEIVWTILPAVILVLIALPSLRILYLM) threads the bilayer. Residues 88-230 (DEINDPHLTI…NWSSLMLEDA (143 aa)) are Mitochondrial intermembrane-facing. Residues histidine 161, cysteine 196, glutamate 198, cysteine 200, histidine 204, and methionine 207 each contribute to the Cu cation site. Residue glutamate 198 participates in Mg(2+) binding.

It belongs to the cytochrome c oxidase subunit 2 family. As to quaternary structure, component of the cytochrome c oxidase (complex IV, CIV), a multisubunit enzyme composed of 14 subunits. The complex is composed of a catalytic core of 3 subunits MT-CO1, MT-CO2 and MT-CO3, encoded in the mitochondrial DNA, and 11 supernumerary subunits COX4I, COX5A, COX5B, COX6A, COX6B, COX6C, COX7A, COX7B, COX7C, COX8 and NDUFA4, which are encoded in the nuclear genome. The complex exists as a monomer or a dimer and forms supercomplexes (SCs) in the inner mitochondrial membrane with NADH-ubiquinone oxidoreductase (complex I, CI) and ubiquinol-cytochrome c oxidoreductase (cytochrome b-c1 complex, complex III, CIII), resulting in different assemblies (supercomplex SCI(1)III(2)IV(1) and megacomplex MCI(2)III(2)IV(2)). Found in a complex with TMEM177, COA6, COX18, COX20, SCO1 and SCO2. Interacts with TMEM177 in a COX20-dependent manner. Interacts with COX20. Interacts with COX16. The cofactor is Cu cation.

It localises to the mitochondrion inner membrane. The catalysed reaction is 4 Fe(II)-[cytochrome c] + O2 + 8 H(+)(in) = 4 Fe(III)-[cytochrome c] + 2 H2O + 4 H(+)(out). In terms of biological role, component of the cytochrome c oxidase, the last enzyme in the mitochondrial electron transport chain which drives oxidative phosphorylation. The respiratory chain contains 3 multisubunit complexes succinate dehydrogenase (complex II, CII), ubiquinol-cytochrome c oxidoreductase (cytochrome b-c1 complex, complex III, CIII) and cytochrome c oxidase (complex IV, CIV), that cooperate to transfer electrons derived from NADH and succinate to molecular oxygen, creating an electrochemical gradient over the inner membrane that drives transmembrane transport and the ATP synthase. Cytochrome c oxidase is the component of the respiratory chain that catalyzes the reduction of oxygen to water. Electrons originating from reduced cytochrome c in the intermembrane space (IMS) are transferred via the dinuclear copper A center (CU(A)) of subunit 2 and heme A of subunit 1 to the active site in subunit 1, a binuclear center (BNC) formed by heme A3 and copper B (CU(B)). The BNC reduces molecular oxygen to 2 water molecules using 4 electrons from cytochrome c in the IMS and 4 protons from the mitochondrial matrix. This Carassius auratus (Goldfish) protein is Cytochrome c oxidase subunit 2 (mt-co2).